The primary structure comprises 179 residues: Large ribosomal subunit protein uL5 (179 aa).

This sequence belongs to the universal ribosomal protein uL5 family. In terms of assembly, part of the 50S ribosomal subunit; part of the 5S rRNA/L5/L18/L25 subcomplex. Contacts the 5S rRNA and the P site tRNA. Forms a bridge to the 30S subunit in the 70S ribosome.

Functionally, this is one of the proteins that bind and probably mediate the attachment of the 5S RNA into the large ribosomal subunit, where it forms part of the central protuberance. In the 70S ribosome it contacts protein S13 of the 30S subunit (bridge B1b), connecting the 2 subunits; this bridge is implicated in subunit movement. Contacts the P site tRNA; the 5S rRNA and some of its associated proteins might help stabilize positioning of ribosome-bound tRNAs. The polypeptide is Large ribosomal subunit protein uL5 (Herminiimonas arsenicoxydans).